Consider the following 196-residue polypeptide: Glycerol-3-phosphate acyltransferase (196 aa).

The next 4 membrane-spanning stretches (helical) occupy residues 5-25 (GLIAFAFGYLLGSIPFGMILT), 70-90 (VVIALLLSGPGAAMAATLGAF), 111-131 (IGVLLGLFWPAALAFCAIWLL), and 152-172 (LLLWGFGHPQFALLFAVLTVL).

It belongs to the PlsY family. As to quaternary structure, probably interacts with PlsX.

It is found in the cell inner membrane. It carries out the reaction an acyl phosphate + sn-glycerol 3-phosphate = a 1-acyl-sn-glycero-3-phosphate + phosphate. The protein operates within lipid metabolism; phospholipid metabolism. Catalyzes the transfer of an acyl group from acyl-phosphate (acyl-PO(4)) to glycerol-3-phosphate (G3P) to form lysophosphatidic acid (LPA). This enzyme utilizes acyl-phosphate as fatty acyl donor, but not acyl-CoA or acyl-ACP. In Nitrobacter winogradskyi (strain ATCC 25391 / DSM 10237 / CIP 104748 / NCIMB 11846 / Nb-255), this protein is Glycerol-3-phosphate acyltransferase.